A 214-amino-acid chain; its full sequence is Riboflavin kinase (214 aa).

Residues 1–91 (MRSIMEVETL…YCSIFEDGGA (91 aa)) form an H-T-H motif-like region. Residues 92 to 214 (PVMRGKVVTG…DGDEVEVTLE (123 aa)) form a riboflavin kinase region. 101-106 (GLGEGQ) is a CDP binding site. Mg(2+) is bound by residues Thr-130 and Asn-132. FMN-binding residues include Thr-182 and Glu-190. 195 to 198 (IKLR) serves as a coordination point for CDP.

Belongs to the archaeal riboflavin kinase family. It depends on Mg(2+) as a cofactor.

It carries out the reaction riboflavin + CTP = CDP + FMN + H(+). It functions in the pathway cofactor biosynthesis; FMN biosynthesis; FMN from riboflavin (CTP route): step 1/1. In terms of biological role, catalyzes the CTP-dependent phosphorylation of riboflavin (vitamin B2) to form flavin mononucleotide (FMN). The protein is Riboflavin kinase (ribK) of Methanocella arvoryzae (strain DSM 22066 / NBRC 105507 / MRE50).